Reading from the N-terminus, the 334-residue chain is Holliday junction branch migration complex subunit RuvB (334 aa).

The large ATPase domain (RuvB-L) stretch occupies residues 4 to 184 (ADRLIQPQLQ…FGIPLRLEFY (181 aa)). Residues Arg-24, Gly-65, Lys-68, Thr-69, Thr-70, 131-133 (EDY), Arg-174, Tyr-184, and Arg-221 each bind ATP. Position 69 (Thr-69) interacts with Mg(2+). The interval 185–255 (NVKDLSTIVS…VAEHALDLLD (71 aa)) is small ATPAse domain (RuvB-S). Residues 258–334 (GEGFDYMDRK…YLHFGMIKPE (77 aa)) form a head domain (RuvB-H) region. 3 residues coordinate DNA: Arg-294, Arg-313, and Arg-318.

Belongs to the RuvB family. As to quaternary structure, homohexamer. Forms an RuvA(8)-RuvB(12)-Holliday junction (HJ) complex. HJ DNA is sandwiched between 2 RuvA tetramers; dsDNA enters through RuvA and exits via RuvB. An RuvB hexamer assembles on each DNA strand where it exits the tetramer. Each RuvB hexamer is contacted by two RuvA subunits (via domain III) on 2 adjacent RuvB subunits; this complex drives branch migration. In the full resolvosome a probable DNA-RuvA(4)-RuvB(12)-RuvC(2) complex forms which resolves the HJ.

It is found in the cytoplasm. It carries out the reaction ATP + H2O = ADP + phosphate + H(+). In terms of biological role, the RuvA-RuvB-RuvC complex processes Holliday junction (HJ) DNA during genetic recombination and DNA repair, while the RuvA-RuvB complex plays an important role in the rescue of blocked DNA replication forks via replication fork reversal (RFR). RuvA specifically binds to HJ cruciform DNA, conferring on it an open structure. The RuvB hexamer acts as an ATP-dependent pump, pulling dsDNA into and through the RuvAB complex. RuvB forms 2 homohexamers on either side of HJ DNA bound by 1 or 2 RuvA tetramers; 4 subunits per hexamer contact DNA at a time. Coordinated motions by a converter formed by DNA-disengaged RuvB subunits stimulates ATP hydrolysis and nucleotide exchange. Immobilization of the converter enables RuvB to convert the ATP-contained energy into a lever motion, pulling 2 nucleotides of DNA out of the RuvA tetramer per ATP hydrolyzed, thus driving DNA branch migration. The RuvB motors rotate together with the DNA substrate, which together with the progressing nucleotide cycle form the mechanistic basis for DNA recombination by continuous HJ branch migration. Branch migration allows RuvC to scan DNA until it finds its consensus sequence, where it cleaves and resolves cruciform DNA. The protein is Holliday junction branch migration complex subunit RuvB of Shewanella sp. (strain MR-7).